A 121-amino-acid polypeptide reads, in one-letter code: Large ribosomal subunit protein uL22 (121 aa).

Belongs to the universal ribosomal protein uL22 family. In terms of assembly, part of the 50S ribosomal subunit.

In terms of biological role, this protein binds specifically to 23S rRNA; its binding is stimulated by other ribosomal proteins, e.g. L4, L17, and L20. It is important during the early stages of 50S assembly. It makes multiple contacts with different domains of the 23S rRNA in the assembled 50S subunit and ribosome. Functionally, the globular domain of the protein is located near the polypeptide exit tunnel on the outside of the subunit, while an extended beta-hairpin is found that lines the wall of the exit tunnel in the center of the 70S ribosome. This chain is Large ribosomal subunit protein uL22, found in Kocuria rhizophila (strain ATCC 9341 / DSM 348 / NBRC 103217 / DC2201).